The sequence spans 541 residues: 1'-carboxy-chondrochloren decarboxylase (541 aa).

Residues 39-226 enclose the FAD-binding PCMH-type domain; it reads TTHRIPAIIS…TRMTIWLAPR (188 aa).

The catalysed reaction is 1'-carboxy-chondrochloren A + FAD + 2 H(+) = chondrochloren A + FADH2 + CO2. It carries out the reaction 1'-carboxy-chondrochloren B + FAD + 2 H(+) = chondrochloren B + FADH2 + CO2. It functions in the pathway antibiotic biosynthesis. Activity is not affected by the addition of EDTA or/and EGTA chelators or in the presence of external metals like Zn(2+), Mg(2+), Mn(2+) and Fe(2+). Activity is inhibited under low oxygen conditions. Functionally, oxidative decarboxylase involved in the biosynthesis of the antibiotics chondrochloren A and chondrochloren B. Catalyzes the decarboxylation of biologically inactive pre-chondrochloren A and pre-chondrochloren B to yield mature chondrochloren A and chondrochloren B, respectively. Cannot decarboxylate free L-tyrosine, 3-chloro-tyrosine or a number of chlorinated and non-chlorinated analog substrates containing variable N-acyl chains. The protein is 1'-carboxy-chondrochloren decarboxylase of Chondromyces crocatus.